We begin with the raw amino-acid sequence, 443 residues long: Glutamyl-tRNA reductase (443 aa).

Substrate is bound by residues 49–52 (TCNR), Ser-109, 114–116 (ETQ), and Gln-120. Catalysis depends on Cys-50, which acts as the Nucleophile. Residue 189–194 (GAGKMS) coordinates NADP(+).

This sequence belongs to the glutamyl-tRNA reductase family. Homodimer.

The enzyme catalyses (S)-4-amino-5-oxopentanoate + tRNA(Glu) + NADP(+) = L-glutamyl-tRNA(Glu) + NADPH + H(+). The protein operates within porphyrin-containing compound metabolism; protoporphyrin-IX biosynthesis; 5-aminolevulinate from L-glutamyl-tRNA(Glu): step 1/2. Catalyzes the NADPH-dependent reduction of glutamyl-tRNA(Glu) to glutamate 1-semialdehyde (GSA). This chain is Glutamyl-tRNA reductase, found in Heliobacterium mobile (Heliobacillus mobilis).